Reading from the N-terminus, the 192-residue chain is Fe/S biogenesis protein NfuA (192 aa).

Cys-149 and Cys-152 together coordinate [4Fe-4S] cluster.

It belongs to the NfuA family. Homodimer. [4Fe-4S] cluster is required as a cofactor.

Its function is as follows. Involved in iron-sulfur cluster biogenesis. Binds a 4Fe-4S cluster, can transfer this cluster to apoproteins, and thereby intervenes in the maturation of Fe/S proteins. Could also act as a scaffold/chaperone for damaged Fe/S proteins. This chain is Fe/S biogenesis protein NfuA, found in Shewanella piezotolerans (strain WP3 / JCM 13877).